Here is a 195-residue protein sequence, read N- to C-terminus: Triosephosphate isomerase, cytosolic (195 aa).

The active-site Electrophile is H37. The Proton acceptor role is filled by E107.

This sequence belongs to the triosephosphate isomerase family. Homodimer.

It is found in the cytoplasm. The enzyme catalyses D-glyceraldehyde 3-phosphate = dihydroxyacetone phosphate. It participates in carbohydrate biosynthesis; gluconeogenesis. Its pathway is carbohydrate degradation; glycolysis; D-glyceraldehyde 3-phosphate from glycerone phosphate: step 1/1. The protein is Triosephosphate isomerase, cytosolic of Lactuca sativa (Garden lettuce).